A 35-amino-acid chain; its full sequence is Kappa-stichotoxin-She3a (35 aa).

In terms of domain architecture, ShKT spans 3 to 35 (CIDTIPKSRCTAFQCKHSMKYRLSFCRKTCGTC). 3 cysteine pairs are disulfide-bonded: Cys-3-Cys-35, Cys-12-Cys-28, and Cys-17-Cys-32.

It belongs to the sea anemone type 1 potassium channel toxin family. Type 1a subfamily.

The protein localises to the secreted. Its subcellular location is the nematocyst. Its function is as follows. Peptide with both antimicrobial and neurotoxin activities. Inhibits voltage-dependent potassium channels. Potently blocks Kv1.1/KCNA1 (IC(50)=6.7-87 pM) and Kv1.3/KCNA3 (IC(50)=10-250 pM). Less potently blocks Kv1.4/KCNA4 (IC(50)=0.31 nM), and Kv1.6/KCNA6 (IC(50)=0.16 nM). Shows moderate activity on Kv1.2/KCNA2 (IC(50)=9 nM), Kv1.7/KCNA7 (IC(50)=11.5 nM), and KCa3.1/KCNN4 (Kd=0.03-30 nM). Blocks Kv channels by binding to a shallow vestibule at the outer entrance to the ion conduction pathway and occluding the entrance to the pore. Shows antibacterial activity against all tested bacteria (the Gram-positive bacteria B.subtilis and S.aureus, and the Gram-negative bacteria S.typhimurium and P.aeruginosa). The sequence is that of Kappa-stichotoxin-She3a from Stichodactyla helianthus (Sun anemone).